A 210-amino-acid chain; its full sequence is Methylthioribulose-1-phosphate dehydratase (210 aa).

Residues His97 and His99 each coordinate Zn(2+).

It belongs to the aldolase class II family. MtnB subfamily. In terms of assembly, homotetramer. Zn(2+) is required as a cofactor.

The catalysed reaction is 5-(methylsulfanyl)-D-ribulose 1-phosphate = 5-methylsulfanyl-2,3-dioxopentyl phosphate + H2O. Its pathway is amino-acid biosynthesis; L-methionine biosynthesis via salvage pathway; L-methionine from S-methyl-5-thio-alpha-D-ribose 1-phosphate: step 2/6. In terms of biological role, catalyzes the dehydration of methylthioribulose-1-phosphate (MTRu-1-P) into 2,3-diketo-5-methylthiopentyl-1-phosphate (DK-MTP-1-P). In Geobacillus kaustophilus (strain HTA426), this protein is Methylthioribulose-1-phosphate dehydratase.